We begin with the raw amino-acid sequence, 330 residues long: Ketol-acid reductoisomerase (NADP(+)) (330 aa).

One can recognise a KARI N-terminal Rossmann domain in the interval 2-182 (ARMYYDADAN…GGTRAGILET (181 aa)). NADP(+) contacts are provided by residues 25-28 (YGSQ), Ser51, Ser53, and 83-86 (DEFQ). The active site involves His108. Gly134 contributes to the NADP(+) binding site. The region spanning 183–328 (SFREETETDL…KDLRAMFSWL (146 aa)) is the KARI C-terminal knotted domain. Mg(2+) is bound by residues Asp191, Glu195, Glu227, and Glu231. Ser252 serves as a coordination point for substrate.

It belongs to the ketol-acid reductoisomerase family. The cofactor is Mg(2+).

It catalyses the reaction (2R)-2,3-dihydroxy-3-methylbutanoate + NADP(+) = (2S)-2-acetolactate + NADPH + H(+). The catalysed reaction is (2R,3R)-2,3-dihydroxy-3-methylpentanoate + NADP(+) = (S)-2-ethyl-2-hydroxy-3-oxobutanoate + NADPH + H(+). It functions in the pathway amino-acid biosynthesis; L-isoleucine biosynthesis; L-isoleucine from 2-oxobutanoate: step 2/4. It participates in amino-acid biosynthesis; L-valine biosynthesis; L-valine from pyruvate: step 2/4. Its function is as follows. Involved in the biosynthesis of branched-chain amino acids (BCAA). Catalyzes an alkyl-migration followed by a ketol-acid reduction of (S)-2-acetolactate (S2AL) to yield (R)-2,3-dihydroxy-isovalerate. In the isomerase reaction, S2AL is rearranged via a Mg-dependent methyl migration to produce 3-hydroxy-3-methyl-2-ketobutyrate (HMKB). In the reductase reaction, this 2-ketoacid undergoes a metal-dependent reduction by NADPH to yield (R)-2,3-dihydroxy-isovalerate. This chain is Ketol-acid reductoisomerase (NADP(+)), found in Synechococcus sp. (strain ATCC 27144 / PCC 6301 / SAUG 1402/1) (Anacystis nidulans).